Consider the following 930-residue polypeptide: Protocadherin gamma-B6 (930 aa).

The signal sequence occupies residues 1-30 (MGGSCAQRRRAGPRQVLFPLLLPFFYPTLC). Cadherin domains follow at residues 31 to 133 (EPIR…APQF), 134 to 242 (DKKE…PPVF), 243 to 347 (SRDE…SPEI), 348 to 452 (IITS…APVF), 453 to 562 (DQTS…APRV), and 570 to 675 (DGSA…LPDL). Over 31–691 (EPIRYSIPEE…SDPQAELQFY (661 aa)) the chain is Extracellular. 3 N-linked (GlcNAc...) asparagine glycosylation sites follow: N304, N419, and N545. A helical transmembrane segment spans residues 692–712 (LVVALALISVLFLLAVILAIA). Over 713 to 930 (LRLRRSLSPT…KKKSGKKEKK (218 aa)) the chain is Cytoplasmic. Disordered regions lie at residues 791–839 (PHGG…WPNN) and 900–930 (ATLTNAAGKRDGKAPAGGNGNKKKSGKKEKK). Positions 800–839 (HPETLTSQAPPNTDWRFSQAQRPGTSGSQNGDDTGTWPNN) are enriched in polar residues. Basic residues predominate over residues 920-930 (NKKKSGKKEKK).

It is found in the cell membrane. In terms of biological role, potential calcium-dependent cell-adhesion protein. May be involved in the establishment and maintenance of specific neuronal connections in the brain. This chain is Protocadherin gamma-B6 (PCDHGB6), found in Pan troglodytes (Chimpanzee).